Consider the following 353-residue polypeptide: Guanine nucleotide-binding protein subunit alpha (353 aa).

A disordered region spans residues 1–26 (MGCGMSVEEKEGKARNEEIENQLKRD). Gly2 is lipidated: N-myristoyl glycine. A lipid anchor (S-palmitoyl cysteine) is attached at Cys3. Residues 7 to 26 (VEEKEGKARNEEIENQLKRD) show a composition bias toward basic and acidic residues. The G-alpha domain maps to 32 to 353 (NEIKMLLLGA…QENLRLCGLI (322 aa)). The segment at 35–48 (KMLLLGAGESGKST) is G1 motif. Residues Glu43, Ser44, Gly45, Lys46, Ser47, Thr48, Asp150, Leu175, Thr181, Gly203, Asn269, Lys270, Asp272, and Ala325 each contribute to the GTP site. Residue Ser47 coordinates Mg(2+). The G2 motif stretch occupies residues 173–181 (DVLRSRVKT). Thr181 is a Mg(2+) binding site. Positions 196 to 205 (YRMFDVGGQR) are G3 motif. Residues 265 to 272 (ILFLNKID) form a G4 motif region. Residues 323 to 328 (TCATDT) form a G5 motif region.

It belongs to the G-alpha family. G(q) subfamily. As to quaternary structure, g proteins are composed of 3 units; alpha, beta and gamma. The alpha chain contains the guanine nucleotide binding site. It depends on Mg(2+) as a cofactor.

Its function is as follows. Guanine nucleotide-binding proteins (G proteins) are involved as modulators or transducers in various transmembrane signaling systems. In Sporothrix schenckii (strain ATCC 58251 / de Perez 2211183) (Rose-picker's disease fungus), this protein is Guanine nucleotide-binding protein subunit alpha (SSG-1).